We begin with the raw amino-acid sequence, 242 residues long: Large ribosomal subunit protein uL30y (242 aa).

The protein belongs to the universal ribosomal protein uL30 family.

The sequence is that of Large ribosomal subunit protein uL30y (RPL7B) from Arabidopsis thaliana (Mouse-ear cress).